The following is a 234-amino-acid chain: MKLLLLLALLVGAVSTRHLNVDTSSLQSLQGEESLAQDGETAEGATREAASGVLMPLREEVKEEMEGGSGSEDDPEEEEEEKEMESSSELDMGPEDVQCPKEEDIVKFEGSPGCKICRYVVLSVPKTFKQAQSVCQRCFRGNLASIHSYNINLQVQRSSRILNVAQVWIGGQLRGKGHHKHFHWVDGTLWNFWYWAAGQPWRGNNSGRCVTLCARGGHWRRSHCGVRRAFSCSY.

A signal peptide spans 1–15; the sequence is MKLLLLLALLVGAVS. The propeptide at 16–115 is acidic; it reads TRHLNVDTSS…VKFEGSPGCK (100 aa). The tract at residues 26–96 is disordered; the sequence is LQSLQGEESL…SSELDMGPED (71 aa). Serine 69 carries an O-linked (Xyl...) (glycosaminoglycan) serine glycan. A compositionally biased stretch (acidic residues) spans 71-94; the sequence is SEDDPEEEEEEKEMESSSELDMGP. The 102-residue stretch at 133–234 folds into the C-type lectin domain; sequence SVCQRCFRGN…GVRRAFSCSY (102 aa). 2 disulfides stabilise this stretch: cysteine 135–cysteine 232 and cysteine 209–cysteine 224.

In terms of processing, nitrated.

Its subcellular location is the cytoplasmic granule. In terms of biological role, MBP may play some important roles in the allergic reactions and inflammations, since MBP is capable of releasing histamine from mast cells and damaging the epithelial cells of bronchial tubes. Antiparasitic and antibiotic. The sequence is that of Eosinophil granule major basic protein 2 (MBP2) from Cavia porcellus (Guinea pig).